The sequence spans 255 residues: Acetyl-coenzyme A carboxylase carboxyl transferase subunit alpha (255 aa).

A CoA carboxyltransferase C-terminal domain is found at 1 to 235 (MNIAKIVREA…KKELQTELAR (235 aa)).

It belongs to the AccA family. As to quaternary structure, acetyl-CoA carboxylase is a heterohexamer composed of biotin carboxyl carrier protein (AccB), biotin carboxylase (AccC) and two subunits each of ACCase subunit alpha (AccA) and ACCase subunit beta (AccD).

The protein localises to the cytoplasm. It carries out the reaction N(6)-carboxybiotinyl-L-lysyl-[protein] + acetyl-CoA = N(6)-biotinyl-L-lysyl-[protein] + malonyl-CoA. The protein operates within lipid metabolism; malonyl-CoA biosynthesis; malonyl-CoA from acetyl-CoA: step 1/1. Functionally, component of the acetyl coenzyme A carboxylase (ACC) complex. First, biotin carboxylase catalyzes the carboxylation of biotin on its carrier protein (BCCP) and then the CO(2) group is transferred by the carboxyltransferase to acetyl-CoA to form malonyl-CoA. This chain is Acetyl-coenzyme A carboxylase carboxyl transferase subunit alpha, found in Streptococcus pneumoniae serotype 2 (strain D39 / NCTC 7466).